A 265-amino-acid polypeptide reads, in one-letter code: Methyl-coenzyme M reductase II subunit gamma (265 aa).

Position 123 (R123) interacts with coenzyme M.

The protein belongs to the methyl-coenzyme M reductase gamma subunit family. In terms of assembly, MCR is a hexamer of two alpha, two beta, and two gamma chains, forming a dimer of heterotrimers. The cofactor is coenzyme F430.

The enzyme catalyses coenzyme B + methyl-coenzyme M = methane + coenzyme M-coenzyme B heterodisulfide. It functions in the pathway one-carbon metabolism; methyl-coenzyme M reduction; methane from methyl-coenzyme M: step 1/1. Functionally, component of the methyl-coenzyme M reductase (MCR) I that catalyzes the reductive cleavage of methyl-coenzyme M (CoM-S-CH3 or 2-(methylthio)ethanesulfonate) using coenzyme B (CoB or 7-mercaptoheptanoylthreonine phosphate) as reductant which results in the production of methane and the mixed heterodisulfide of CoB and CoM (CoM-S-S-CoB). This is the final step in methanogenesis. The sequence is that of Methyl-coenzyme M reductase II subunit gamma (mrtG) from Methanothermobacter thermautotrophicus (strain ATCC 29096 / DSM 1053 / JCM 10044 / NBRC 100330 / Delta H) (Methanobacterium thermoautotrophicum).